Reading from the N-terminus, the 474-residue chain is Ribulose bisphosphate carboxylase large chain (474 aa).

The substrate site is built by Asn-123 and Thr-173. Lys-175 serves as the catalytic Proton acceptor. Residue Lys-177 coordinates substrate. Mg(2+) is bound by residues Lys-201, Asp-203, and Glu-204. N6-carboxylysine is present on Lys-201. His-293 acts as the Proton acceptor in catalysis. Substrate contacts are provided by Arg-294, His-326, and Ser-378.

The protein belongs to the RuBisCO large chain family. Type I subfamily. As to quaternary structure, heterohexadecamer of 8 large chains and 8 small chains; disulfide-linked. The disulfide link is formed within the large subunit homodimers. It depends on Mg(2+) as a cofactor. Post-translationally, the disulfide bond which can form in the large chain dimeric partners within the hexadecamer appears to be associated with oxidative stress and protein turnover.

It is found in the carboxysome. The enzyme catalyses 2 (2R)-3-phosphoglycerate + 2 H(+) = D-ribulose 1,5-bisphosphate + CO2 + H2O. The catalysed reaction is D-ribulose 1,5-bisphosphate + O2 = 2-phosphoglycolate + (2R)-3-phosphoglycerate + 2 H(+). Its function is as follows. RuBisCO catalyzes two reactions: the carboxylation of D-ribulose 1,5-bisphosphate, the primary event in carbon dioxide fixation, as well as the oxidative fragmentation of the pentose substrate in the photorespiration process. Both reactions occur simultaneously and in competition at the same active site. This chain is Ribulose bisphosphate carboxylase large chain, found in Synechococcus sp.